The chain runs to 356 residues: DNA-directed RNA polymerase subunit alpha (356 aa).

The interval 1 to 259 is alpha N-terminal domain (alpha-NTD); it reads MIKAAATLKS…KLMTACLTTL (259 aa). The alpha C-terminal domain (alpha-CTD) stretch occupies residues 277-356; sequence FVQVNYNKME…STYGIELKED (80 aa).

The protein belongs to the RNA polymerase alpha chain family. In plastids the minimal PEP RNA polymerase catalytic core is composed of four subunits: alpha, beta, beta', and beta''. When a (nuclear-encoded) sigma factor is associated with the core the holoenzyme is formed, which can initiate transcription.

The protein localises to the plastid. It localises to the chloroplast. It catalyses the reaction RNA(n) + a ribonucleoside 5'-triphosphate = RNA(n+1) + diphosphate. DNA-dependent RNA polymerase catalyzes the transcription of DNA into RNA using the four ribonucleoside triphosphates as substrates. This is DNA-directed RNA polymerase subunit alpha from Ostreococcus tauri.